The following is a 210-amino-acid chain: ATP phosphoribosyltransferase (210 aa).

The protein belongs to the ATP phosphoribosyltransferase family. Short subfamily. As to quaternary structure, heteromultimer composed of HisG and HisZ subunits.

The protein localises to the cytoplasm. The catalysed reaction is 1-(5-phospho-beta-D-ribosyl)-ATP + diphosphate = 5-phospho-alpha-D-ribose 1-diphosphate + ATP. Its pathway is amino-acid biosynthesis; L-histidine biosynthesis; L-histidine from 5-phospho-alpha-D-ribose 1-diphosphate: step 1/9. Functionally, catalyzes the condensation of ATP and 5-phosphoribose 1-diphosphate to form N'-(5'-phosphoribosyl)-ATP (PR-ATP). Has a crucial role in the pathway because the rate of histidine biosynthesis seems to be controlled primarily by regulation of HisG enzymatic activity. This is ATP phosphoribosyltransferase from Bacillus cytotoxicus (strain DSM 22905 / CIP 110041 / 391-98 / NVH 391-98).